Consider the following 186-residue polypeptide: Inner membrane-spanning protein YciB (186 aa).

Helical transmembrane passes span 3–23 (FLFD…AGIY), 24–44 (VATT…WFKH), 49–69 (AMQW…LIFH), 76–96 (WKPT…AVLL), 121–141 (LVWS…AYHF), and 149–169 (FKLF…SVWL).

The protein belongs to the YciB family.

The protein localises to the cell inner membrane. In terms of biological role, plays a role in cell envelope biogenesis, maintenance of cell envelope integrity and membrane homeostasis. This chain is Inner membrane-spanning protein YciB, found in Ralstonia nicotianae (strain ATCC BAA-1114 / GMI1000) (Ralstonia solanacearum).